We begin with the raw amino-acid sequence, 286 residues long: 4-diphosphocytidyl-2-C-methyl-D-erythritol kinase (286 aa).

K12 is an active-site residue. 96–106 (PHGAGLGGGSA) is an ATP binding site. D138 is an active-site residue.

Belongs to the GHMP kinase family. IspE subfamily.

The enzyme catalyses 4-CDP-2-C-methyl-D-erythritol + ATP = 4-CDP-2-C-methyl-D-erythritol 2-phosphate + ADP + H(+). It functions in the pathway isoprenoid biosynthesis; isopentenyl diphosphate biosynthesis via DXP pathway; isopentenyl diphosphate from 1-deoxy-D-xylulose 5-phosphate: step 3/6. Functionally, catalyzes the phosphorylation of the position 2 hydroxy group of 4-diphosphocytidyl-2C-methyl-D-erythritol. In Nitratidesulfovibrio vulgaris (strain DP4) (Desulfovibrio vulgaris), this protein is 4-diphosphocytidyl-2-C-methyl-D-erythritol kinase.